The primary structure comprises 634 residues: Threonine--tRNA ligase (634 aa).

One can recognise a TGS domain in the interval 1 to 61 (MINIRFPDGS…NSNCELRLIT (61 aa)). The tract at residues 241 to 532 (DHRKIGKVLD…LIEHYAGNLP (292 aa)) is catalytic. Residues C332, H383, and H509 each contribute to the Zn(2+) site.

Belongs to the class-II aminoacyl-tRNA synthetase family. As to quaternary structure, homodimer. Zn(2+) is required as a cofactor.

It is found in the cytoplasm. The catalysed reaction is tRNA(Thr) + L-threonine + ATP = L-threonyl-tRNA(Thr) + AMP + diphosphate + H(+). Catalyzes the attachment of threonine to tRNA(Thr) in a two-step reaction: L-threonine is first activated by ATP to form Thr-AMP and then transferred to the acceptor end of tRNA(Thr). Also edits incorrectly charged L-seryl-tRNA(Thr). The protein is Threonine--tRNA ligase of Francisella tularensis subsp. tularensis (strain WY96-3418).